A 569-amino-acid chain; its full sequence is Proline--tRNA ligase (569 aa).

Belongs to the class-II aminoacyl-tRNA synthetase family. ProS type 1 subfamily. Homodimer.

The protein localises to the cytoplasm. The catalysed reaction is tRNA(Pro) + L-proline + ATP = L-prolyl-tRNA(Pro) + AMP + diphosphate. Catalyzes the attachment of proline to tRNA(Pro) in a two-step reaction: proline is first activated by ATP to form Pro-AMP and then transferred to the acceptor end of tRNA(Pro). As ProRS can inadvertently accommodate and process non-cognate amino acids such as alanine and cysteine, to avoid such errors it has two additional distinct editing activities against alanine. One activity is designated as 'pretransfer' editing and involves the tRNA(Pro)-independent hydrolysis of activated Ala-AMP. The other activity is designated 'posttransfer' editing and involves deacylation of mischarged Ala-tRNA(Pro). The misacylated Cys-tRNA(Pro) is not edited by ProRS. The chain is Proline--tRNA ligase from Campylobacter jejuni subsp. doylei (strain ATCC BAA-1458 / RM4099 / 269.97).